The primary structure comprises 440 residues: MFASGARVAVGVSGGADSVCLLHALVELGGLKLSVLHVDHGLRGAESRADAEFVGELAARMGLPFCLREVTLGPGNVEQEGRRARLRFFHEQLAAGNCDRVALGHTRSDQAETVLFRFLRGSGTAGLAGIRPVTAEGIVRPLIELERAEIEEYLRERQIPWREDATNAGEEFARNRIRHGLLPQLAAEWNPALVETLAHTAEFARAEEAYWAGEIDRLSAESLTAGDGCVLIRTESLKALSLAVARRLVRRAIQMAKGDLRGVDFGHVERVVELASAPTGRGRTQVPGLDVRRSFEWLRLGVPFTRKPYSLKPLVPGTTQIPGTRNGISLELIEKSETSVLPWNVYNTEMGCLDWKRLAGSLELRNWRFGDQYQPMGLTGSEKIKTLFQLQRIPVWERAQWPVLTDGESIVWTRRFGPAAGFAAGPESGVVLKLGEVTIR.

Ser-13–Ser-18 lines the ATP pocket.

This sequence belongs to the tRNA(Ile)-lysidine synthase family.

It localises to the cytoplasm. The catalysed reaction is cytidine(34) in tRNA(Ile2) + L-lysine + ATP = lysidine(34) in tRNA(Ile2) + AMP + diphosphate + H(+). Functionally, ligates lysine onto the cytidine present at position 34 of the AUA codon-specific tRNA(Ile) that contains the anticodon CAU, in an ATP-dependent manner. Cytidine is converted to lysidine, thus changing the amino acid specificity of the tRNA from methionine to isoleucine. This is tRNA(Ile)-lysidine synthase from Solibacter usitatus (strain Ellin6076).